Here is a 151-residue protein sequence, read N- to C-terminus: Protein PLANT CADMIUM RESISTANCE 1 (151 aa).

Helical transmembrane passes span 31–47 (ITLC…AEIV) and 54–71 (CCAA…TSCG).

This sequence belongs to the cornifelin family. As to quaternary structure, homopentamer. Expressed in aerial part, but not in roots. Detected in the guard and mesophyll cells.

It is found in the cell membrane. Functionally, involved in glutathione-independent cadmium resistance. Reduces cadmium uptake rather than activating efflux, but is not closely coupled to calcium transporter. This is Protein PLANT CADMIUM RESISTANCE 1 (PCR1) from Arabidopsis thaliana (Mouse-ear cress).